The chain runs to 388 residues: Succinate--CoA ligase [ADP-forming] subunit beta (388 aa).

An ATP-grasp domain is found at 9–245; it reads KELLASYGLP…KSQENERELK (237 aa). ATP is bound by residues K46, 53–55, E100, Y103, and E108; that span reads GRG. Mg(2+) is bound by residues N200 and D214. Substrate is bound by residues N265 and 322-324; that span reads GIV.

The protein belongs to the succinate/malate CoA ligase beta subunit family. As to quaternary structure, heterotetramer of two alpha and two beta subunits. Requires Mg(2+) as cofactor.

It catalyses the reaction succinate + ATP + CoA = succinyl-CoA + ADP + phosphate. It carries out the reaction GTP + succinate + CoA = succinyl-CoA + GDP + phosphate. It functions in the pathway carbohydrate metabolism; tricarboxylic acid cycle; succinate from succinyl-CoA (ligase route): step 1/1. Its function is as follows. Succinyl-CoA synthetase functions in the citric acid cycle (TCA), coupling the hydrolysis of succinyl-CoA to the synthesis of either ATP or GTP and thus represents the only step of substrate-level phosphorylation in the TCA. The beta subunit provides nucleotide specificity of the enzyme and binds the substrate succinate, while the binding sites for coenzyme A and phosphate are found in the alpha subunit. This Neisseria gonorrhoeae (strain NCCP11945) protein is Succinate--CoA ligase [ADP-forming] subunit beta.